Consider the following 673-residue polypeptide: DNA ligase (673 aa).

Residues aspartate 33–aspartate 37, serine 82–leucine 83, and glutamate 115 contribute to the NAD(+) site. Lysine 117 functions as the N6-AMP-lysine intermediate in the catalytic mechanism. Positions 138, 175, 292, and 316 each coordinate NAD(+). Positions 410, 413, 428, and 434 each coordinate Zn(2+). In terms of domain architecture, BRCT spans valine 593–leucine 673.

It belongs to the NAD-dependent DNA ligase family. LigA subfamily. Mg(2+) is required as a cofactor. It depends on Mn(2+) as a cofactor.

It carries out the reaction NAD(+) + (deoxyribonucleotide)n-3'-hydroxyl + 5'-phospho-(deoxyribonucleotide)m = (deoxyribonucleotide)n+m + AMP + beta-nicotinamide D-nucleotide.. In terms of biological role, DNA ligase that catalyzes the formation of phosphodiester linkages between 5'-phosphoryl and 3'-hydroxyl groups in double-stranded DNA using NAD as a coenzyme and as the energy source for the reaction. It is essential for DNA replication and repair of damaged DNA. The chain is DNA ligase from Pasteurella multocida (strain Pm70).